The following is a 253-amino-acid chain: Small ribosomal subunit protein uS2 (253 aa).

Belongs to the universal ribosomal protein uS2 family.

This Hahella chejuensis (strain KCTC 2396) protein is Small ribosomal subunit protein uS2.